The chain runs to 37 residues: Large ribosomal subunit protein bL36c (37 aa).

It belongs to the bacterial ribosomal protein bL36 family.

The protein localises to the plastid. The chain is Large ribosomal subunit protein bL36c from Cuscuta exaltata (Tall dodder).